Here is a 219-residue protein sequence, read N- to C-terminus: Ras-related protein Rab-3B (219 aa).

An N-acetylalanine modification is found at Ala-2. Positions 31, 32, 33, 34, 35, 36, 37, 49, and 53 each coordinate GTP. Residue Thr-36 participates in Mg(2+) binding. The short motif at Asp-45–Asp-58 is the Switch 1 element. 2 residues coordinate Mg(2+): Thr-54 and Asp-77. A Switch 2 motif is present at residues Thr-78–Met-96. Gly-80 contributes to the GTP binding site. Position 86 is a phosphothreonine; by LRRK2 (Thr-86). GTP is bound by residues Asn-135, Lys-136, Asp-138, Ala-166, and Lys-167. A phosphoserine mark is found at Ser-188 and Ser-190. S-geranylgeranyl cysteine attachment occurs at residues Cys-217 and Cys-219. Cysteine methyl ester is present on Cys-219.

Belongs to the small GTPase superfamily. Rab family. As to quaternary structure, interacts with RIMS1, RIMS2, RPH3A and RPH3AL. The GTP-bound form interacts with GAS8/DRC4 (via coiled-coil domains). Interacts with GDI2, CHM and CHML; phosphorylation at Thr-86 disrupts these interactions. Interacts with MADD (via uDENN domain); the GTP-bound form is preferred for interaction. Mg(2+) serves as cofactor. In terms of processing, phosphorylation of Thr-86 in the switch II region by LRRK2 prevents the association of RAB regulatory proteins, including CHM, CHML and RAB GDP dissociation inhibitor GDI2. Abundantly expressed in testis, lung and brain.

It localises to the cell membrane. The protein localises to the golgi apparatus. It carries out the reaction GTP + H2O = GDP + phosphate + H(+). With respect to regulation, regulated by guanine nucleotide exchange factors (GEFs) which promote the exchange of bound GDP for free GTP. Regulated by GTPase activating proteins (GAPs) which increase the GTP hydrolysis activity. Inhibited by GDP dissociation inhibitors (GDIs) which prevent Rab-GDP dissociation. Its function is as follows. The small GTPases Rab are key regulators of intracellular membrane trafficking, from the formation of transport vesicles to their fusion with membranes. Rabs cycle between an inactive GDP-bound form and an active GTP-bound form that is able to recruit to membranes different sets of downstream effectors directly responsible for vesicle formation, movement, tethering and fusion. This Mus musculus (Mouse) protein is Ras-related protein Rab-3B.